The sequence spans 236 residues: uncharacterized protein (236 aa).

Residues 52–72 form a helical membrane-spanning segment; that stretch reads FFPYIALFQIIMLIILLILYF. Positions 183–236 are disordered; that stretch reads SDKREHDDEELSFTTEMETITTETETSSTIPHLRSLPIKSESSMETTSEETDEE. Low complexity predominate over residues 196–212; sequence TTEMETITTETETSSTI.

The protein resides in the membrane. This is an uncharacterized protein from Acheta domesticus (House cricket).